Consider the following 445-residue polypeptide: 3-phosphoshikimate 1-carboxyvinyltransferase (445 aa).

The interval 1 to 25 (MTDSNQPTPLQARKSGALHGTARVP) is disordered. 3-phosphoshikimate-binding residues include K28, S29, and R33. K28 lines the phosphoenolpyruvate pocket. Positions 101 and 129 each coordinate phosphoenolpyruvate. S175, Q177, D328, and K355 together coordinate 3-phosphoshikimate. Q177 provides a ligand contact to phosphoenolpyruvate. D328 acts as the Proton acceptor in catalysis. Positions 359 and 402 each coordinate phosphoenolpyruvate.

This sequence belongs to the EPSP synthase family. Monomer.

It localises to the cytoplasm. The enzyme catalyses 3-phosphoshikimate + phosphoenolpyruvate = 5-O-(1-carboxyvinyl)-3-phosphoshikimate + phosphate. It functions in the pathway metabolic intermediate biosynthesis; chorismate biosynthesis; chorismate from D-erythrose 4-phosphate and phosphoenolpyruvate: step 6/7. Functionally, catalyzes the transfer of the enolpyruvyl moiety of phosphoenolpyruvate (PEP) to the 5-hydroxyl of shikimate-3-phosphate (S3P) to produce enolpyruvyl shikimate-3-phosphate and inorganic phosphate. The protein is 3-phosphoshikimate 1-carboxyvinyltransferase of Rhodopseudomonas palustris (strain TIE-1).